The following is a 209-amino-acid chain: Large ribosomal subunit protein uL4 (209 aa).

A disordered region spans residues 47-72 (TSSTKTRSEVRGSSKKPWKQKGTGRA). A compositionally biased stretch (basic residues) spans 59–72 (SSKKPWKQKGTGRA).

Belongs to the universal ribosomal protein uL4 family. Part of the 50S ribosomal subunit.

One of the primary rRNA binding proteins, this protein initially binds near the 5'-end of the 23S rRNA. It is important during the early stages of 50S assembly. It makes multiple contacts with different domains of the 23S rRNA in the assembled 50S subunit and ribosome. Its function is as follows. Forms part of the polypeptide exit tunnel. The sequence is that of Large ribosomal subunit protein uL4 from Borreliella burgdorferi (strain ZS7) (Borrelia burgdorferi).